The following is a 766-amino-acid chain: Pentatricopeptide repeat-containing protein At5g28460 (766 aa).

PPR repeat units follow at residues 151–181 (TIVA…LDSN), 184–218 (NSQV…ESVF), 221–257 (NRIT…GVSP), 258–292 (NSVW…KTPL), 293–327 (EAPP…KIRP), 328–358 (DVVT…MRGK), 369–404 (DSIH…RCVP), 405–439 (NAVT…EIKP), 440–474 (NVVT…GVKG), 475–509 (NVVT…GCSP), 510–544 (DAKI…GFSL), 545–579 (DLLA…GKKP), 580–614 (DSIT…GLDP), 615–650 (TVTT…KVNP), 651–685 (NTVI…MVRP), and 686–720 (NVET…SCEP).

This sequence belongs to the PPR family. P subfamily.

This chain is Pentatricopeptide repeat-containing protein At5g28460, found in Arabidopsis thaliana (Mouse-ear cress).